Reading from the N-terminus, the 168-residue chain is Nicotinamide-nucleotide adenylyltransferase (168 aa).

Belongs to the archaeal NMN adenylyltransferase family.

The protein localises to the cytoplasm. The catalysed reaction is beta-nicotinamide D-ribonucleotide + ATP + H(+) = diphosphate + NAD(+). It participates in cofactor biosynthesis; NAD(+) biosynthesis; NAD(+) from nicotinamide D-ribonucleotide: step 1/1. The chain is Nicotinamide-nucleotide adenylyltransferase from Methanosphaerula palustris (strain ATCC BAA-1556 / DSM 19958 / E1-9c).